Here is a 692-residue protein sequence, read N- to C-terminus: Potassium-transporting ATPase ATP-binding subunit (692 aa).

Helical transmembrane passes span 35-55 (VMFIVFLGALFTTWIFFKDLY), 64-84 (LQISLWLWFTVLFANFAEAIA), 213-233 (IALTMLLSGLSFIFLIAVMSL), and 254-274 (ILISLLVCLIPTTIAGLLSAI). The active-site 4-aspartylphosphate intermediate is the aspartate 307. ATP contacts are provided by residues aspartate 344, glutamate 348, 377–384 (FSASTKMS), and lysine 400. Positions 523 and 527 each coordinate Mg(2+). 3 helical membrane-spanning segments follow: residues 592–612 (YFAILPALFGSFYAVSEVGPL), 626–646 (AVLSAVIFNALVIPALIPLAL), and 672–692 (MVIPFLGIKCIDLMLGFLGII).

It belongs to the cation transport ATPase (P-type) (TC 3.A.3) family. Type IA subfamily. As to quaternary structure, the system is composed of three essential subunits: KdpA, KdpB and KdpC.

It is found in the cell inner membrane. The catalysed reaction is K(+)(out) + ATP + H2O = K(+)(in) + ADP + phosphate + H(+). Part of the high-affinity ATP-driven potassium transport (or Kdp) system, which catalyzes the hydrolysis of ATP coupled with the electrogenic transport of potassium into the cytoplasm. This subunit is responsible for energy coupling to the transport system and for the release of the potassium ions to the cytoplasm. The sequence is that of Potassium-transporting ATPase ATP-binding subunit from Leptospira interrogans serogroup Icterohaemorrhagiae serovar Lai (strain 56601).